The sequence spans 103 residues: Small ribosomal subunit protein uS10 (103 aa).

It belongs to the universal ribosomal protein uS10 family. As to quaternary structure, part of the 30S ribosomal subunit.

Involved in the binding of tRNA to the ribosomes. The sequence is that of Small ribosomal subunit protein uS10 from Pseudomonas aeruginosa (strain LESB58).